A 307-amino-acid polypeptide reads, in one-letter code: Myoblast determination protein 1 homolog (307 aa).

One can recognise a bHLH domain in the interval Asp-109–Leu-160. Positions Thr-271–Leu-307 are disordered.

As to quaternary structure, efficient DNA binding requires dimerization with another bHLH protein. As to expression, expressed in fast and myotomal muscle. Very weak expression in brain, skin and gonads.

The protein localises to the nucleus. Its function is as follows. May act as a transcriptional activator that promotes transcription of muscle-specific target genes and plays a role in muscle differentiation. In Takifugu rubripes (Japanese pufferfish), this protein is Myoblast determination protein 1 homolog (myod).